The primary structure comprises 94 residues: Putative FXYD domain-containing ion transport regulator 8 (94 aa).

An N-terminal signal peptide occupies residues 1–18 (MEVVLIFVYSLLVPVVLA). The Extracellular segment spans residues 19 to 34 (SAAKEKEIDPFHYNYQ). A helical membrane pass occupies residues 35–58 (TLRIGGLVFDVVLFLVPSCHLLSH). At 59 to 94 (RCKCSFNQKPQDPGDKEAQVENFITANAKEPQKAKN) the chain is on the cytoplasmic side. The disordered stretch occupies residues 66–94 (QKPQDPGDKEAQVENFITANAKEPQKAKN).

This sequence belongs to the FXYD family.

The protein resides in the membrane. The sequence is that of Putative FXYD domain-containing ion transport regulator 8 (FXYD6P3) from Homo sapiens (Human).